A 552-amino-acid polypeptide reads, in one-letter code: Serine/threonine-protein kinase RIO2 (552 aa).

A Protein kinase domain is found at 97–272 (VGNQMGVGKE…DRDVKCIKDF (176 aa)). Position 123 (Lys123) interacts with ATP. Asp228 serves as the catalytic Proton acceptor. Ser332, Ser335, Ser337, Ser350, Ser362, Ser380, Ser382, Ser385, and Ser390 each carry phosphoserine. The Nuclear export signal signature appears at 399–408 (ALEEIKGQVV). Phosphoserine occurs at positions 412, 417, and 442. The residue at position 445 (Tyr445) is a Phosphotyrosine. Ser548 carries the phosphoserine modification.

This sequence belongs to the protein kinase superfamily. RIO-type Ser/Thr kinase family. As to quaternary structure, associated with late 40S pre-ribosomal particles. Interacts with PLK1 (via its N-terminus). Requires Mg(2+) as cofactor. Post-translationally, autophosphorylated (in vitro). Phosphorylation at Ser-335, Ser-380, Ser-548 by PLK1 affects the timing of the metaphase-anaphase transition.

The protein localises to the cytoplasm. The enzyme catalyses L-seryl-[protein] + ATP = O-phospho-L-seryl-[protein] + ADP + H(+). It catalyses the reaction L-threonyl-[protein] + ATP = O-phospho-L-threonyl-[protein] + ADP + H(+). Serine/threonine-protein kinase involved in the final steps of cytoplasmic maturation of the 40S ribosomal subunit. Involved in export of the 40S pre-ribosome particles (pre-40S) from the nucleus to the cytoplasm. Its kinase activity is required for the release of NOB1, PNO1 and LTV1 from the late pre-40S and the processing of 18S-E pre-rRNA to the mature 18S rRNA. Regulates the timing of the metaphase-anaphase transition during mitotic progression, and its phosphorylation, most likely by PLK1, regulates this function. In Homo sapiens (Human), this protein is Serine/threonine-protein kinase RIO2.